Reading from the N-terminus, the 302-residue chain is tRNA pseudouridine synthase B (302 aa).

The active-site Nucleophile is Asp-47.

It belongs to the pseudouridine synthase TruB family. Type 1 subfamily.

The catalysed reaction is uridine(55) in tRNA = pseudouridine(55) in tRNA. Functionally, responsible for synthesis of pseudouridine from uracil-55 in the psi GC loop of transfer RNAs. The chain is tRNA pseudouridine synthase B from Ruegeria sp. (strain TM1040) (Silicibacter sp.).